The chain runs to 222 residues: Cytidylate kinase (222 aa).

11 to 19 (GPAGAGKST) contacts ATP.

It belongs to the cytidylate kinase family. Type 1 subfamily.

The protein resides in the cytoplasm. The catalysed reaction is CMP + ATP = CDP + ADP. It carries out the reaction dCMP + ATP = dCDP + ADP. In Desulforamulus reducens (strain ATCC BAA-1160 / DSM 100696 / MI-1) (Desulfotomaculum reducens), this protein is Cytidylate kinase.